A 161-amino-acid polypeptide reads, in one-letter code: Large ribosomal subunit protein eL21 (161 aa).

This sequence belongs to the eukaryotic ribosomal protein eL21 family.

This chain is Large ribosomal subunit protein eL21 (RPL21), found in Cyanophora paradoxa.